The following is a 708-amino-acid chain: uncharacterized protein (708 aa).

4 disordered regions span residues 1 to 79, 119 to 301, 349 to 390, and 410 to 461; these read MHAR…RRSS, AGEF…IHQR, YLSH…GDEN, and SNSF…KRQR. A compositionally biased stretch (pro residues) spans 65–74; it reads LPPPLPPPPV. The segment covering 238–249 has biased composition (polar residues); that stretch reads DEAQSKTGSSSA. The span at 260–274 shows a compositional bias: low complexity; it reads SKVSEGSSSLSAGSG. Residues 410–419 are compositionally biased toward polar residues; sequence SNSFPSSILR. Residues 442–461 show a composition bias toward basic and acidic residues; it reads VGEKRPGEGSDLEEGSKRQR.

This is an uncharacterized protein from Arabidopsis thaliana (Mouse-ear cress).